A 118-amino-acid polypeptide reads, in one-letter code: Non-specific lipid-transfer protein 5 (118 aa).

Positions M1–A25 are cleaved as a signal peptide. Intrachain disulfides connect C29/C76, C39/C53, C54/C100, and C74/C114.

It belongs to the plant LTP family.

Plant non-specific lipid-transfer proteins transfer phospholipids as well as galactolipids across membranes. May play a role in wax or cutin deposition in the cell walls of expanding epidermal cells and certain secretory tissues. In Arabidopsis thaliana (Mouse-ear cress), this protein is Non-specific lipid-transfer protein 5 (LTP5).